The sequence spans 558 residues: Protein shisa-7 (558 aa).

Residues 1 to 22 (MPALLLLGTVALLASAAGPAGA) form the signal peptide. The Extracellular segment spans residues 23–189 (RPSNDTSSVA…GGEGPGGSTA (167 aa)). N-linked (GlcNAc...) asparagine glycosylation is present at N26. Disordered regions lie at residues 53 to 79 (GGSA…ARAP) and 142 to 181 (TPPP…GRGG). The span at 57–77 (AGTSANATKTSPASGTGAAAR) shows a compositional bias: low complexity. Positions 148-181 (GGAGGAGGAGGGPGPGQAGWLEGGRAGGAGGRGG) are enriched in gly residues. Residues 154–175 (GGAGGGPGPGQAGWLEGGRAGG) are GRID. A helical transmembrane segment spans residues 190 to 210 (YVVCGVISFALAVGVGAKVAF). Topologically, residues 211–558 (SKASRAPRAH…RTASKNEVTV (348 aa)) are cytoplasmic. Positions 236–263 (QAGPATRPDRARSSSLTPGLGGPDSMAP) are disordered. S438 is modified (phosphoserine). The disordered stretch occupies residues 443-506 (RQSREHLLSP…HHHHALHGSP (64 aa)). Residues 453–462 (PRSPALPPDP) show a composition bias toward pro residues. Residues 466-477 (ASLAASHSNLLL) are compositionally biased toward low complexity. T532 carries the phosphothreonine modification. Positions 555-558 (EVTV) match the PDZ-binding motif.

The protein belongs to the shisa family. In terms of assembly, interacts with GABA(A)R (GABA type A receptor) subunits GABRA1, GABRA2 and GABRG2; the interaction is direct. Does not interact with GABRB2 and GABRB3 subunits. Interacts with AMPAR subunits GRIA1, GRIA2 and GRIA3 and AMPAR auxiliary proteins SHISA6 and SHISA7 in heterologous cells. Interacts (via PDZ-binding motif) with DLG4/PSD-95 (via PDZ domain)in heterologous cells; the interaction is direct. Post-translationally, N-glycosylated. In terms of tissue distribution, mainly expressed in neurons. Highly expressed in brain structures including cortex, striatum, olfactory bulb, amygdala hippocampus CA1-3 and dentate gyrus (at protein level).

Its subcellular location is the postsynaptic density membrane. Functionally, transmembrane protein that regulates gamma-aminobutyric acid type A receptor (GABA(A)R) trafficking, channel deactivation kinetics and pharmacology, necessary for fast inhibitory transmission in the brain. Enhances the action of benzodiazepine, a primary GABA(A)Rs target drug, in the brain. May affect channel kinetics of AMPA-type glutamate receptors (AMPAR), the brain's main excitatory neurotransmitter, necessary for synaptic hippocampal plasticity, and memory recall. May regulate the induction and maintenance of long-term potentiation at Schaffer collaterals/CA3-CA1 excitatory synapses. In Mus musculus (Mouse), this protein is Protein shisa-7.